Here is a 218-residue protein sequence, read N- to C-terminus: tRNA (guanosine(18)-2'-O)-methyltransferase (218 aa).

S-adenosyl-L-methionine-binding residues include threonine 111 and isoleucine 154.

Belongs to the class IV-like SAM-binding methyltransferase superfamily. RNA methyltransferase TrmH family.

The catalysed reaction is guanosine(18) in tRNA + S-adenosyl-L-methionine = 2'-O-methylguanosine(18) in tRNA + S-adenosyl-L-homocysteine + H(+). Functionally, catalyzes the 2'-O methylation of guanosine at position 18 in tRNA. The protein is tRNA (guanosine(18)-2'-O)-methyltransferase of Borreliella burgdorferi (strain ATCC 35210 / DSM 4680 / CIP 102532 / B31) (Borrelia burgdorferi).